The primary structure comprises 261 residues: MKISEPPAISKPTRDESELIRMYLKTIICDFKAPMLIAFPILMGLMLKETVKSSLFLRFIIMLLPFSYSALECFLLFRNNLESSYRSELHKMPYSIFNVLLIAFSVISILSIAIFPLSTWSNNDVSSYSMLLPCLIVPLTYMLSISCSLVSGSILFTDTGIDILIDASLLLCTLLLLVFWIIESKYFPYFVFASLILVLIRSFRTRHAPSKENSLPVTAWRVVVFGSILVLSIVIYGSIAYELLDPIHQGWKTIERRIHHL.

It belongs to the UPF0328 family.

This Encephalitozoon cuniculi (strain GB-M1) (Microsporidian parasite) protein is UPF0328 protein ECU06_0100.